A 739-amino-acid chain; its full sequence is Phosphoribosylformylglycinamidine synthase subunit PurL (739 aa).

Residue His-54 is part of the active site. The ATP site is built by Tyr-57 and Lys-96. Mg(2+) is bound at residue Glu-98. Residues 99–102 (SHNH) and Arg-121 contribute to the substrate site. The active-site Proton acceptor is the His-100. Asp-122 contributes to the Mg(2+) binding site. Residue Gln-245 participates in substrate binding. Asp-273 is a Mg(2+) binding site. A substrate-binding site is contributed by 317–319 (ESQ). Asp-500 and Gly-537 together coordinate ATP. Asn-538 provides a ligand contact to Mg(2+). Residue Ser-540 coordinates substrate.

Belongs to the FGAMS family. In terms of assembly, monomer. Part of the FGAM synthase complex composed of 1 PurL, 1 PurQ and 2 PurS subunits.

Its subcellular location is the cytoplasm. It catalyses the reaction N(2)-formyl-N(1)-(5-phospho-beta-D-ribosyl)glycinamide + L-glutamine + ATP + H2O = 2-formamido-N(1)-(5-O-phospho-beta-D-ribosyl)acetamidine + L-glutamate + ADP + phosphate + H(+). Its pathway is purine metabolism; IMP biosynthesis via de novo pathway; 5-amino-1-(5-phospho-D-ribosyl)imidazole from N(2)-formyl-N(1)-(5-phospho-D-ribosyl)glycinamide: step 1/2. Its function is as follows. Part of the phosphoribosylformylglycinamidine synthase complex involved in the purines biosynthetic pathway. Catalyzes the ATP-dependent conversion of formylglycinamide ribonucleotide (FGAR) and glutamine to yield formylglycinamidine ribonucleotide (FGAM) and glutamate. The FGAM synthase complex is composed of three subunits. PurQ produces an ammonia molecule by converting glutamine to glutamate. PurL transfers the ammonia molecule to FGAR to form FGAM in an ATP-dependent manner. PurS interacts with PurQ and PurL and is thought to assist in the transfer of the ammonia molecule from PurQ to PurL. This chain is Phosphoribosylformylglycinamidine synthase subunit PurL, found in Bacillus cereus (strain ATCC 10987 / NRS 248).